The sequence spans 374 residues: Chaperone protein DnaJ (374 aa).

A J domain is found at 4–68 (DYYEILGVSR…EMKARFDRFG (65 aa)). The CR-type zinc finger occupies 132-214 (GGDKELTIKH…CGGRGQKEAT (83 aa)). Zn(2+) contacts are provided by cysteine 145, cysteine 148, cysteine 162, cysteine 165, cysteine 188, cysteine 191, cysteine 202, and cysteine 205. 4 CXXCXGXG motif repeats span residues 145 to 152 (CGTCNGSG), 162 to 169 (CSTCGGTG), 188 to 195 (CPSCNGSG), and 202 to 209 (CVDCGGRG).

It belongs to the DnaJ family. As to quaternary structure, homodimer. Zn(2+) serves as cofactor.

It localises to the cytoplasm. In terms of biological role, participates actively in the response to hyperosmotic and heat shock by preventing the aggregation of stress-denatured proteins and by disaggregating proteins, also in an autonomous, DnaK-independent fashion. Unfolded proteins bind initially to DnaJ; upon interaction with the DnaJ-bound protein, DnaK hydrolyzes its bound ATP, resulting in the formation of a stable complex. GrpE releases ADP from DnaK; ATP binding to DnaK triggers the release of the substrate protein, thus completing the reaction cycle. Several rounds of ATP-dependent interactions between DnaJ, DnaK and GrpE are required for fully efficient folding. Also involved, together with DnaK and GrpE, in the DNA replication of plasmids through activation of initiation proteins. The sequence is that of Chaperone protein DnaJ from Trichodesmium erythraeum (strain IMS101).